Consider the following 277-residue polypeptide: Protein HEAT-INDUCED TAS1 TARGET 1 (277 aa).

The protein belongs to the heat induced plant HTT protein family. Interacts with the heat shock proteins HSP70-14 and At2g33735/HSP40, and with NFYC2 in both cytoplasm and nucleus. Expressed ubiquitously, including in seedlings, leaves, stems, inflorescences and siliques.

Its subcellular location is the cytoplasm. The protein localises to the nucleus. Mediates both basal and acquired thermotolerance via HSFA1s-directed pathways (e.g. HSFA1A, HSFA1B, and HSFA1D). Triggers the expression of HSFA1A and HSFA1B. This is Protein HEAT-INDUCED TAS1 TARGET 1 from Arabidopsis thaliana (Mouse-ear cress).